We begin with the raw amino-acid sequence, 206 residues long: Ras-related protein Rab-18 (206 aa).

The residue at position 1 (Met-1) is an N-acetylmethionine. GTP contacts are provided by Ser-17, Gly-20, Lys-21, Ser-22, Ser-23, Asp-34, Pro-35, Thr-40, Gly-66, Lys-123, and Asp-125. Residue Ser-22 participates in Mg(2+) binding. 2 consecutive short sequence motifs (switch) follow at residues 31–45 (DTFDPELAATIGVDF) and 63–80 (DTAGQERFRTLTPSYYRG). Thr-40 contributes to the Mg(2+) binding site. Phosphoserine is present on Ser-144. Ala-152 serves as a coordination point for GTP. Residue Cys-199 is the site of S-palmitoyl cysteine attachment. At Cys-203 the chain carries Cysteine methyl ester. Cys-203 carries S-geranylgeranyl cysteine lipidation. Positions 204–206 (SVL) are cleaved as a propeptide — removed in mature form.

The protein belongs to the small GTPase superfamily. Rab family. Interacts (in GTP-bound form) with ZFYVE1. Interacts with ZW10 and this interaction is enhanced in the presence of ZFYVE1. Interacts with BSCL2. As to quaternary structure, (Microbial infection) Interacts with Hepatitis C virus (HCV) non-structural protein 5A; this interaction may promote the association of NS5A and other viral replicase components with lipid droplets. Mg(2+) serves as cofactor. As to expression, ubiquitous.

It localises to the endoplasmic reticulum membrane. Its subcellular location is the golgi apparatus. The protein localises to the cis-Golgi network membrane. It is found in the lipid droplet. The protein resides in the apical cell membrane. The catalysed reaction is GTP + H2O = GDP + phosphate + H(+). Its activity is regulated as follows. Regulated by guanine nucleotide exchange factor (GEF) RAB3GAP1-RAB3GAP2 complex at the cis-Golgi membrane which promotes the exchange of bound GDP for free GTP. Regulated by GTPase activating protein (GAP) TBC1D20 at the ER membrane which increases the GTP hydrolysis activity. Inhibited by GDP dissociation inhibitors (GDIs) which prevent Rab-GDP dissociation. Functionally, the small GTPases Rab are key regulators of intracellular membrane trafficking, from the formation of transport vesicles to their fusion with membranes. Rabs cycle between an inactive GDP-bound form and an active GTP-bound form that is able to recruit to membranes different sets of downstream effectors directly responsible for vesicle formation, movement, tethering and fusion. RAB18 is required for the localization of ZFYVE1 to lipid droplets and for its function in mediating the formation of endoplasmic reticulum-lipid droplets (ER-LD) contacts. Also required for maintaining endoplasmic reticulum structure. Plays a role in apical endocytosis/recycling. Plays a key role in eye and brain development and neurodegeneration. The chain is Ras-related protein Rab-18 from Homo sapiens (Human).